Consider the following 277-residue polypeptide: Orotidine 5'-phosphate decarboxylase (277 aa).

The Proton donor role is filled by Lys-93.

It belongs to the OMP decarboxylase family. Type 2 subfamily.

It catalyses the reaction orotidine 5'-phosphate + H(+) = UMP + CO2. Its pathway is pyrimidine metabolism; UMP biosynthesis via de novo pathway; UMP from orotate: step 2/2. This Haloarcula marismortui (strain ATCC 43049 / DSM 3752 / JCM 8966 / VKM B-1809) (Halobacterium marismortui) protein is Orotidine 5'-phosphate decarboxylase.